A 1131-amino-acid chain; its full sequence is Protein TOPLESS (1131 aa).

Residues 4 to 36 form the LisH domain; it reads LSRELVFLILQFLDEEKFKETVHKLEQESGFFF. One can recognise a CTLH domain in the interval 34-92; sequence FFFNMKYFEDEVHNGNWDEVEKYLSGFTKVDDNRYSMKIFFEIRKQKYLEALDKHDRPK. S214 carries the post-translational modification Phosphoserine. The disordered stretch occupies residues 286 to 305; sequence TPPTNASLDYPSADSEHVSK. 15 WD repeats span residues 353-393, 415-454, 460-501, 504-545, 548-591, 595-634, 639-678, 710-756, 766-805, 833-871, 874-914, 917-956, 967-1005, 1010-1049, and 1060-1102; these read SQGS…RLVQ, EPVV…DMRQ, AHVG…KRHT, GHEA…SRVD, APGR…VKRT, FHKR…LLTA, GGLQ…RLLH, DRSA…EPSQ, LRVA…RNAT, NPEE…TMAT, PPPP…VKSK, GHSK…KQRS, NSAP…CMKQ, ESLA…LRCR, and LSNS…GKWG. The segment at 1100–1131 is disordered; the sequence is KWGVAPPAENGSASGAPTAPSVGASASDQPQR.

Tetramer. Homodimer. Interacts (via the LisH domain) with WUS (via the C-terminal domain). Interacts with NINJA/AFPH2. Interacts with IAA1; IAA2; IAA3; IAA4; IAA6; IAA8; IAA9; IAA11; IAA13; IAA14; IAA17; IAA18; IAA26; IAA27 and IAA28. Interacts (via the LisH domain) with IAA12/BDL (via domain I). Can form a complex with IAA12 and ARF5. Interacts with AP2 (via EAR motif) and HDA19. Interacts with TIFY5A/JAZ8 (via EAR motif). Interacts with SPEAR3/TIE1. Interacts with SPL (via EAR motif). Interacts with ZAT2 and ZAT3 (via the EAR motif). Interacts with JAZ13 (via EAR motif). Interacts with GIR1 and GIR2. As to expression, expressed in embryo and in extraembryonic tissues. Expressed in inflorescences, flowers, floral meristems, developing anthers and ovules. Detected in the vascular tissues, shoot apical meristem, cotyledons and young leaves. Expressed ubiquitously in the pistils, stamens and pollens.

It is found in the nucleus. Transcriptional corepressor. May repress the expression of root-promoting genes in the top half of the embryo to allow proper differentiation of the shoot pole during the transition stage of embryogenesis. Regulates the expression of PLT1 and PLT2. Negative regulator of jasmonate responses. Negative regulator of auxin responses. Negative regulator of multiple floral organ identity genes. Required for ovule development. The sequence is that of Protein TOPLESS (TPL) from Arabidopsis thaliana (Mouse-ear cress).